The following is a 190-amino-acid chain: Potassium-transporting ATPase KdpC subunit (190 aa).

A helical membrane pass occupies residues 10-30 (VLLLVLTGLTGFAYPLLSTAI).

This sequence belongs to the KdpC family. In terms of assembly, the system is composed of three essential subunits: KdpA, KdpB and KdpC.

It is found in the cell inner membrane. Part of the high-affinity ATP-driven potassium transport (or Kdp) system, which catalyzes the hydrolysis of ATP coupled with the electrogenic transport of potassium into the cytoplasm. This subunit acts as a catalytic chaperone that increases the ATP-binding affinity of the ATP-hydrolyzing subunit KdpB by the formation of a transient KdpB/KdpC/ATP ternary complex. The polypeptide is Potassium-transporting ATPase KdpC subunit (Sorangium cellulosum (strain So ce56) (Polyangium cellulosum (strain So ce56))).